The following is a 319-amino-acid chain: Transaldolase (319 aa).

The active-site Schiff-base intermediate with substrate is the K126.

The protein belongs to the transaldolase family. Type 1 subfamily. Homodimer.

It localises to the cytoplasm. It carries out the reaction D-sedoheptulose 7-phosphate + D-glyceraldehyde 3-phosphate = D-erythrose 4-phosphate + beta-D-fructose 6-phosphate. Its pathway is carbohydrate degradation; pentose phosphate pathway; D-glyceraldehyde 3-phosphate and beta-D-fructose 6-phosphate from D-ribose 5-phosphate and D-xylulose 5-phosphate (non-oxidative stage): step 2/3. Transaldolase is important for the balance of metabolites in the pentose-phosphate pathway. The polypeptide is Transaldolase (Bordetella petrii (strain ATCC BAA-461 / DSM 12804 / CCUG 43448)).